Here is a 356-residue protein sequence, read N- to C-terminus: Guanine nucleotide-binding protein alpha-17 subunit (356 aa).

Glycine 2 carries the N-myristoyl glycine lipid modification. Cysteine 4 carries S-palmitoyl cysteine lipidation. One can recognise a G-alpha domain in the interval serine 32–methionine 356. A G1 motif region spans residues lysine 35–threonine 48. GTP contacts are provided by residues glycine 40–serine 47, leucine 177–threonine 183, aspartate 202–glutamine 206, asparagine 271–aspartate 274, and alanine 328. The Mg(2+) site is built by serine 47 and threonine 183. The tract at residues aspartate 175–threonine 183 is G2 motif. The tract at residues phenylalanine 198–arginine 207 is G3 motif. Positions isoleucine 267–aspartate 274 are G4 motif. The tract at residues threonine 326 to threonine 331 is G5 motif.

This sequence belongs to the G-alpha family. G proteins are composed of 3 units; alpha, beta and gamma. The alpha chain contains the guanine nucleotide binding site.

It is found in the cell projection. The protein localises to the cilium. Its subcellular location is the dendrite. Its function is as follows. Guanine nucleotide-binding proteins (G proteins) are involved as modulators or transducers in various transmembrane signaling systems. This specific G-alpha subunit plays an important role in olfaction and in cilia morphogenesis. Involved in chemotactic responses to attractants diacetyl, pyrazine, 2,4,5-trimethylthiazole, benzaldehyde, isoamyl alcohol, butanone and 2,3-pentanedione. Displays a redundant function with gpa-3 in chemotactic responses. Involved in avoidance responses to copper, sodium dodecyl sulfate and linoleic acid. Involved in osmotic avoidance and mechanosensory responses. Involved in specifying fan-like morphology of cilia of head sensory neurons AWC. The sequence is that of Guanine nucleotide-binding protein alpha-17 subunit (odr-3) from Caenorhabditis briggsae.